The sequence spans 620 residues: Tyrosine-protein kinase ITK/TSK (620 aa).

The PH domain occupies 4–111 (FILLEEQLIK…WVLALKEETR (108 aa)). Residues 113-149 (NNSLVPKYHPNFWMDGKWRCCSQLEKLATGCAQYDPT) form a Btk-type zinc finger. The Zn(2+) site is built by H121, C132, C133, and C143. The region spanning 171–231 (PEETVVIALY…PSSYLVEKSP (61 aa)) is the SH3 domain. Y180 carries the phosphotyrosine; by autocatalysis modification. Residues 239-338 (WYNKSISRDK…GLVTRLRYPV (100 aa)) form the SH2 domain. Residues 363-615 (LTFVQEIGSG…SRLLRQLAEI (253 aa)) form the Protein kinase domain. Residues 369–377 (IGSGQFGLV) and K391 contribute to the ATP site. Residue D482 is the Proton acceptor of the active site. Y512 carries the post-translational modification Phosphotyrosine; by LCK. At S565 the chain carries Phosphoserine.

This sequence belongs to the protein kinase superfamily. Tyr protein kinase family. TEC subfamily. In terms of assembly, homooligomerizes; this association negatively regulates kinase activity. Interacts with PPIA/CYPA; this interaction regulates TCR signal strength via a proline-directed conformational switch in ITK. Interacts with THEMIS. Interacts with FASLG. Interacts with VAV1; this interaction is important for VAV1 localization and TCR-induced actin polarization. Interacts with TBX21. It depends on Zn(2+) as a cofactor. In terms of processing, phosphorylated at Tyr-512 in the activation loop of the kinase domain by LCK. Subsequent autophosphorylation at Tyr-180 leads to the kinase activation. The autophosphorylated Tyr-180 lies within the substrate binding sequence of the SH3 domain. Post-translationally, ubiquitinated. In terms of tissue distribution, T-cell lines and natural killer cell lines.

The protein localises to the cytoplasm. The protein resides in the nucleus. It catalyses the reaction L-tyrosyl-[protein] + ATP = O-phospho-L-tyrosyl-[protein] + ADP + H(+). Its function is as follows. Tyrosine kinase that plays an essential role in regulation of the adaptive immune response. Regulates the development, function and differentiation of conventional T-cells and nonconventional NKT-cells. When antigen presenting cells (APC) activate T-cell receptor (TCR), a series of phosphorylation lead to the recruitment of ITK to the cell membrane, in the vicinity of the stimulated TCR receptor, where it is phosphorylated by LCK. Phosphorylation leads to ITK autophosphorylation and full activation. Once activated, phosphorylates PLCG1, leading to the activation of this lipase and subsequent cleavage of its substrates. In turn, the endoplasmic reticulum releases calcium in the cytoplasm and the nuclear activator of activated T-cells (NFAT) translocates into the nucleus to perform its transcriptional duty. Phosphorylates 2 essential adapter proteins: the linker for activation of T-cells/LAT protein and LCP2. Then, a large number of signaling molecules such as VAV1 are recruited and ultimately lead to lymphokine production, T-cell proliferation and differentiation. Required for TCR-mediated calcium response in gamma-delta T-cells, may also be involved in the modulation of the transcriptomic signature in the Vgamma2-positive subset of immature gamma-delta T-cells. Phosphorylates TBX21 at 'Tyr-530' and mediates its interaction with GATA3. In Homo sapiens (Human), this protein is Tyrosine-protein kinase ITK/TSK (ITK).